Here is a 118-residue protein sequence, read N- to C-terminus: Holo-[acyl-carrier-protein] synthase (118 aa).

Mg(2+) is bound by residues aspartate 8 and glutamate 58.

It belongs to the P-Pant transferase superfamily. AcpS family. It depends on Mg(2+) as a cofactor.

It localises to the cytoplasm. The catalysed reaction is apo-[ACP] + CoA = holo-[ACP] + adenosine 3',5'-bisphosphate + H(+). Transfers the 4'-phosphopantetheine moiety from coenzyme A to a Ser of acyl-carrier-protein. This Streptococcus pyogenes serotype M1 protein is Holo-[acyl-carrier-protein] synthase.